Here is a 286-residue protein sequence, read N- to C-terminus: MESELEALAPRPASPAEPPFQALVEAAGGRGQVLLVGELWEREQSRALLRDFAGAVFPPESAPGKPGCAEAESAGTAAATESHGAPGAKAERAIRSPLVFVLCRVGSLTSRESRRRLREMLRDVRDRRCEGAALVGVLVADTGADDARAPELQLLETLLRTVFGRQVGGPVQAAAFRPGCPASSLAVQEAACRALQAAGPGRPEGAWERPARTGLLTCFSWGPRRQRKNRGVTSSQGPAQEHLQFSEEELALTPVFPNGDCEDRGNGSRAQDGGVHIPPDPPEDTR.

Disordered stretches follow at residues 59–89 (PESA…PGAK) and 225–286 (RQRK…EDTR). A compositionally biased stretch (low complexity) spans 69 to 85 (AEAESAGTAAATESHGA).

This is an uncharacterized protein from Mus musculus (Mouse).